The following is a 329-amino-acid chain: Calcium homeostasis modulator protein (329 aa).

Residues 1–14 (MTTSINSVVTVFQN) are Cytoplasmic-facing. The helical transmembrane segment at 15–35 (VFTNHGSTLLNGILIATTVGG) threads the bilayer. The Extracellular portion of the chain corresponds to 36–53 (QSLVRKLTFSCPCAYPLN). The helical transmembrane segment at 54–74 (IYHSLVFMFGPTAALLLIGIT) threads the bilayer. Over 75–103 (VNSTTWKLAHGFFFRVRDTRHSWKTTCVS) the chain is Cytoplasmic. Residues 104 to 124 (WIEVLIQSSVAPIAWLFVVFL) traverse the membrane as a helical segment. At 125–191 (DGGYYRCYRS…DASYLEAESQ (67 aa)) the chain is on the extracellular side. Asparagine 148 carries N-linked (GlcNAc...) asparagine glycosylation. The helical transmembrane segment at 192–212 (IYAWGLLLFSGVAAFLVITCN) threads the bilayer. Over 213-329 (RMCDKYTLVQ…QIIVDETKED (117 aa)) the chain is Cytoplasmic.

This sequence belongs to the CALHM family. In terms of tissue distribution, expressed in head and body wall muscles, IL2, ASG, ASI, ASJ, PHA and PHB sensory neurons, and spermatheca.

The protein resides in the cell membrane. Pore-forming subunit of a voltage-gated ion channel. Permeable to monovalent cations, divalent cations and anions with selectivity Ca(2+) &gt; Mg(2+) &gt; Na(+) = K(+) &gt; Cl(-). Acts both as a voltage-gated and calcium-activated ion channel. Required for normal locomotion. The sequence is that of Calcium homeostasis modulator protein from Caenorhabditis elegans.